A 210-amino-acid polypeptide reads, in one-letter code: ATP-dependent Clp protease proteolytic subunit (210 aa).

Catalysis depends on Ser107, which acts as the Nucleophile. His132 is an active-site residue.

The protein belongs to the peptidase S14 family. Fourteen ClpP subunits assemble into 2 heptameric rings which stack back to back to give a disk-like structure with a central cavity, resembling the structure of eukaryotic proteasomes.

The protein resides in the cytoplasm. It carries out the reaction Hydrolysis of proteins to small peptides in the presence of ATP and magnesium. alpha-casein is the usual test substrate. In the absence of ATP, only oligopeptides shorter than five residues are hydrolyzed (such as succinyl-Leu-Tyr-|-NHMec, and Leu-Tyr-Leu-|-Tyr-Trp, in which cleavage of the -Tyr-|-Leu- and -Tyr-|-Trp bonds also occurs).. Functionally, cleaves peptides in various proteins in a process that requires ATP hydrolysis. Has a chymotrypsin-like activity. Plays a major role in the degradation of misfolded proteins. The polypeptide is ATP-dependent Clp protease proteolytic subunit (Cereibacter sphaeroides (strain ATCC 17029 / ATH 2.4.9) (Rhodobacter sphaeroides)).